We begin with the raw amino-acid sequence, 542 residues long: Bifunctional NAD(P)H-hydrate repair enzyme Nnr (542 aa).

Residues 1 to 243 form an NAD(P)H-hydrate epimerase region; sequence MASSDAEALC…PFVLDRAAEK (243 aa). Residues 19-238 enclose the YjeF N-terminal domain; sequence MQAADRYTIE…DIGMPPFVLD (220 aa). The NADPHX 1; for epimerase activity stretch occupies residues 69 to 73; the sequence is NNGGD. Residues Asn70 and Asp148 each contribute to the K(+) site. An NADPHX 1; for epimerase activity region spans residues 152-158; sequence GTGLTSD. Asp181 is a (6S)-NADPHX binding site. Residue Thr184 coordinates K(+). Residues 251 to 534 enclose the YjeF C-terminal domain; sequence TDAAVRAWWP…DMIPRVAAER (284 aa). Positions 251-542 are ADP-dependent (S)-NAD(P)H-hydrate dehydratase; sequence TDAAVRAWWP…ERFGEGRRQR (292 aa). A (6S)-NADPHX-binding site is contributed by Gly358. Positions 410-416 are NADPHX 2; for dehydratase activity; that stretch reads HAGEFRR. ADP-binding positions include 445 to 449 and 465 to 474; these read KGMPS and TPALATAGTG. Asp475 contacts (6S)-NADPHX.

This sequence in the N-terminal section; belongs to the NnrE/AIBP family. It in the C-terminal section; belongs to the NnrD/CARKD family. K(+) serves as cofactor.

The enzyme catalyses (6S)-NADHX + ADP = AMP + phosphate + NADH + H(+). It carries out the reaction (6S)-NADPHX + ADP = AMP + phosphate + NADPH + H(+). It catalyses the reaction (6R)-NADHX = (6S)-NADHX. The catalysed reaction is (6R)-NADPHX = (6S)-NADPHX. Bifunctional enzyme that catalyzes the epimerization of the S- and R-forms of NAD(P)HX and the dehydration of the S-form of NAD(P)HX at the expense of ADP, which is converted to AMP. This allows the repair of both epimers of NAD(P)HX, a damaged form of NAD(P)H that is a result of enzymatic or heat-dependent hydration. This is Bifunctional NAD(P)H-hydrate repair enzyme Nnr (nnr) from Salinibacter ruber (strain DSM 13855 / M31).